The chain runs to 488 residues: Dipeptidase 3 (488 aa).

The first 35 residues, Met1–Val35, serve as a signal peptide directing secretion. Residues Thr41–Pro60 show a composition bias toward low complexity. Residues Thr41–Asp74 form a disordered region. Cystine bridges form between Cys143–Cys222 and Cys294–Cys326. An N-linked (GlcNAc...) asparagine glycan is attached at Asn331. Residue Ser459 is the site of GPI-anchor amidated serine attachment. Residues Lys460–His487 constitute a propeptide, removed in mature form.

Belongs to the metallo-dependent hydrolases superfamily. Peptidase M19 family. Homodimer; disulfide-linked. Interacts with TEX101; co-localized on the cell surface of spermatocytes, spermatids, and testicular spermatozoa, co-localized only in cytoplasmic droplets of caput and corpus epididymal sperm.

Its subcellular location is the membrane. Its function is as follows. Lacks dipeptidase activity and is unable to hydrolyze cystinyl-bis-glycine, leukotriene D4 and the beta-lactam antibiotic imipenem. The absence of activity may be due to the inability of serine (instead of aspartate found in DPEP1/2) at position 356 to function as the acid/base catalyst and activate the nucleophilic water/hydroxide. The protein is Dipeptidase 3 (Dpep3) of Rattus norvegicus (Rat).